The chain runs to 287 residues: Endolytic peptidoglycan transglycosylase RlpA (287 aa).

The first 25 residues, 1 to 25 (MKLKTGLNLTALLLFMISVAFPAQA), serve as a signal peptide directing secretion. Residues 209-284 (LKGTEFYCLK…ANNKPLIVYT (76 aa)) form the SPOR domain.

It belongs to the RlpA family.

Functionally, lytic transglycosylase with a strong preference for naked glycan strands that lack stem peptides. This is Endolytic peptidoglycan transglycosylase RlpA from Haemophilus influenzae (strain ATCC 51907 / DSM 11121 / KW20 / Rd).